The primary structure comprises 418 residues: Gamma-glutamyl phosphate reductase (418 aa).

It belongs to the gamma-glutamyl phosphate reductase family.

The protein resides in the cytoplasm. The catalysed reaction is L-glutamate 5-semialdehyde + phosphate + NADP(+) = L-glutamyl 5-phosphate + NADPH + H(+). It functions in the pathway amino-acid biosynthesis; L-proline biosynthesis; L-glutamate 5-semialdehyde from L-glutamate: step 2/2. Functionally, catalyzes the NADPH-dependent reduction of L-glutamate 5-phosphate into L-glutamate 5-semialdehyde and phosphate. The product spontaneously undergoes cyclization to form 1-pyrroline-5-carboxylate. This chain is Gamma-glutamyl phosphate reductase, found in Clostridium kluyveri (strain NBRC 12016).